The sequence spans 136 residues: Putative LysR family substrate binding domain-containing protein YagP (136 aa).

It belongs to the LysR transcriptional regulatory family.

This chain is Putative LysR family substrate binding domain-containing protein YagP (yagP), found in Escherichia coli (strain K12).